The chain runs to 553 residues: Effector protein HopAB2 (553 aa).

3 disordered regions span residues 1–123 (MAGI…APRR), 198–227 (AVHQQAASAPVRSPTPTPASPAASSSGSSQ), and 239–275 (APNQGRSSNTAASQTPVDRSPPRVNQRPIRVDRAAMR). The interval 1–308 (MAGINRAGPS…LRTALERHVM (308 aa)) is host recognition; Pto interaction. The span at 24-39 (SGQAHGSGSGASSSNS) shows a compositional bias: low complexity. The span at 47-60 (SNTPPSNAPAPPPT) shows a compositional bias: pro residues. The span at 217 to 227 (SPAASSSGSSQ) shows a compositional bias: low complexity. The span at 242-255 (QGRSSNTAASQTPV) shows a compositional bias: polar residues. An E3 ubiquitin-protein ligase region spans residues 309–553 (QRLPIPLDIG…IAKYAFRIVP (245 aa)). Positions 325-328 (GINP) match the Interaction with Pto-kinase motif. A disordered region spans residues 361–380 (APRPAVPVAPATASRRPDGT). The required for E3 ubiquitin-protein ligase and anti-PCD activities and pathogenesis stretch occupies residues 512–529 (KDLAFMDMKKLAQFLAGK).

This sequence belongs to the HopAB family. In terms of assembly, interacts physically with plant cell Pto. In terms of processing, auto-ubiquitinated.

Its subcellular location is the secreted. Its function is as follows. Effector protein involved in gene-for-gene resistance in tomato plants. It is recognized by the host Pto resistance protein and elicits Pto and Prf-dependent hypersensitive response (HR) and programmed cell death (PCD), resulting in host immunity. In susceptible plants, acts as a virulence factor by suppressing PCD and HR-based plant immunity. This function requires its E3 ubiquitin ligase activity probably by recruiting E2 enzymes and transferring ubiquitin molecules to cellular proteins involved in regulation of PCD and targeting them for degradation. Also, induces expression of host genes involved in ethylene biosynthesis and signaling, in particular ACO1 and ACO2, encoding the ethylene-forming enzyme ACC oxidase. The polypeptide is Effector protein HopAB2 (hopAB2) (Pseudomonas syringae pv. tomato (strain ATCC BAA-871 / DC3000)).